Reading from the N-terminus, the 445-residue chain is tRNA modification GTPase MnmE (445 aa).

Positions 20, 79, and 119 each coordinate (6S)-5-formyl-5,6,7,8-tetrahydrofolate. The 157-residue stretch at 215–371 (GLKLAIIGPP…ILKNIEEIAE (157 aa)) folds into the TrmE-type G domain. Asparagine 225 serves as a coordination point for K(+). GTP-binding positions include 225–230 (NAGKSS), 244–250 (SNIAGTT), and 269–272 (DTAG). Residue serine 229 participates in Mg(2+) binding. Residues serine 244, isoleucine 246, and threonine 249 each coordinate K(+). Threonine 250 serves as a coordination point for Mg(2+). Residue lysine 445 participates in (6S)-5-formyl-5,6,7,8-tetrahydrofolate binding.

This sequence belongs to the TRAFAC class TrmE-Era-EngA-EngB-Septin-like GTPase superfamily. TrmE GTPase family. As to quaternary structure, homodimer. Heterotetramer of two MnmE and two MnmG subunits. Requires K(+) as cofactor.

It localises to the cytoplasm. In terms of biological role, exhibits a very high intrinsic GTPase hydrolysis rate. Involved in the addition of a carboxymethylaminomethyl (cmnm) group at the wobble position (U34) of certain tRNAs, forming tRNA-cmnm(5)s(2)U34. This is tRNA modification GTPase MnmE from Rickettsia bellii (strain OSU 85-389).